We begin with the raw amino-acid sequence, 557 residues long: Cytochrome P450 monooxygenase FSL4 (557 aa).

2 helical membrane passes run 6 to 26 and 32 to 52; these read LWLVTVTATLSLFVWQLIFLL and IVVCLIAESLFFVAWFFYWTV. N-linked (GlcNAc...) asparagine glycans are attached at residues asparagine 127 and asparagine 393. Cysteine 494 is a heme binding site.

The protein belongs to the cytochrome P450 family. It depends on heme as a cofactor.

It localises to the membrane. Its pathway is secondary metabolite biosynthesis. Its function is as follows. Cytochrome P450 monooxygenase; part of the gene cluster that mediates the biosynthesis of fusarielins F, G and H, decaketide compounds with 5 methylations and a decaline core that act as mycoestrogens as they stimulate growth of MCF-7 breast cancer cells. The initial compound in the pathway is produced by the reducing polyketide synthase FSL1. FSL1 lacks an active enoyl reductase (ER) domain and biosynthesis of fusarielins relies on the trans-acting enoyl reductase FSL5, before it is released through hydrolysis catalyzed by the thioesterase FSL2. Fusarielins F, G, and H have a C11=C12 cis double bond and is fully reduced between C10 and C11 and between C12 and C13. FSL3 can be involved in the formation of the C11=C12 cis double bond by moving a hypothetical C10=C11 or C12=C13 trans double bond to form prefusarielin. Prefusarielin is oxygenated at C15 and C16 by FSL4, resulting in fusarielin F, which subsequently is epoxidized into fusarielin G by the same enzyme. The final step in the pathway is a reduction of the carboxylic acid moiety to yield fusarielin H via a still undetermined mechanism. This Gibberella zeae (strain ATCC MYA-4620 / CBS 123657 / FGSC 9075 / NRRL 31084 / PH-1) (Wheat head blight fungus) protein is Cytochrome P450 monooxygenase FSL4.